Here is a 449-residue protein sequence, read N- to C-terminus: Agmatine hydroxycinnamoyltransferase 1 (449 aa).

Residues His-153 and Asp-392 each act as proton acceptor in the active site.

Belongs to the plant acyltransferase family. In terms of tissue distribution, highly expressed in roots. Expressed at low levels in flowers.

Its function is as follows. Hydroxycinnamoyl transferase that catalyzes the transfer of an acyl from p-coumaryol-CoA to agmatine, to produce coumaroyl agmatine. Can use feruloyl-CoA, caffeoyl-CoA and sinapoyl-CoA as acyl donors. Seems to be able to transfer the acyl group from p-coumaroyl-CoA and feruloyl-CoA to the acyl acceptors putrescine and spermidine. In Oryza sativa subsp. japonica (Rice), this protein is Agmatine hydroxycinnamoyltransferase 1.